The primary structure comprises 204 residues: MLRELVKNKKLRARVLERAEEFKLNNRAEENVWFRELILCILTSNSSFISAYKALNYIMDEIFSLSEDQMSKRLRLAGYRFYNLKAKYIANARKLYGNLKTKIKPIADYSQEEARQYIINNIDGLGLKESSHFLRNVGYFDLAIIDRHVLHFLNEIGTSNLKIKNKKDYYLAESILKSISINLGIQVGLLDLYIFFKQTNTIVK.

Catalysis depends on residues Lys-128 and Asp-146.

This sequence belongs to the type-2 OGG1 family.

The enzyme catalyses 2'-deoxyribonucleotide-(2'-deoxyribose 5'-phosphate)-2'-deoxyribonucleotide-DNA = a 3'-end 2'-deoxyribonucleotide-(2,3-dehydro-2,3-deoxyribose 5'-phosphate)-DNA + a 5'-end 5'-phospho-2'-deoxyribonucleoside-DNA + H(+). Catalyzes the excision of an oxidatively damaged form of guanine (7,8-dihydro-8-oxoguanine = 8-oxoG) from DNA. Also cleaves the DNA backbone at apurinic/apyrimidinic sites (AP sites). The chain is 8-oxoguanine DNA glycosylase/AP lyase from Sulfurisphaera tokodaii (strain DSM 16993 / JCM 10545 / NBRC 100140 / 7) (Sulfolobus tokodaii).